The sequence spans 200 residues: MTRYPDYLSKLIFFLRKLPGIGFKTAEKLAFELISWDSEQLKILGNAFHNVASERSHCPLCFTLKESKEADCHFCREERDNQSLCIVASPKDVFFLERSKVFKGRYHVLGSLLSPITGKHIENERLSILKSRIETLCPKEIILAIDATLEGDATALFLKQELQHFSVNISRLALGLPIGLSFDYVDSGTLARAFSGRHSY.

A C4-type zinc finger spans residues 58–75 (CPLCFTLKESKEADCHFC). A Toprim domain is found at 82–177 (QSLCIVASPK…NISRLALGLP (96 aa)).

It belongs to the RecR family.

Functionally, may play a role in DNA repair. It seems to be involved in an RecBC-independent recombinational process of DNA repair. It may act with RecF and RecO. The protein is Recombination protein RecR of Chlamydia pneumoniae (Chlamydophila pneumoniae).